The chain runs to 619 residues: ETS-related transcription factor Elf-1 (619 aa).

A phosphoserine mark is found at serine 110, serine 163, serine 167, and serine 168. The tract at residues 158–199 is disordered; the sequence is EKYADSPGASSPEQPKRKKGRKTKPPRPDSPATTPNISVKKK. Residues 173 to 182 are compositionally biased toward basic residues; sequence KRKKGRKTKP. Serine 187 bears the Phosphoserine mark. The residue at position 190 (threonine 190) is a Phosphothreonine. The ETS DNA-binding region spans 208-290; that stretch reads IYLWEFLLAL…EGQRLVYQFK (83 aa). The disordered stretch occupies residues 300-366; that stretch reads NDEDPSSSIE…DPVEVAQPSE (67 aa). The span at 305–321 shows a compositional bias: low complexity; that stretch reads SSSIESSDPSLSSSATS. The span at 322–335 shows a compositional bias: polar residues; that stretch reads NRNQTSRSRVSSSP. Serine 432 is modified (phosphoserine). The segment at 564 to 592 is disordered; the sequence is TLTQEVEKKESEDHLKENTEKTEQQPQPY. The segment covering 568 to 586 has biased composition (basic and acidic residues); sequence EVEKKESEDHLKENTEKTE.

Belongs to the ETS family. As to quaternary structure, binds to the underphosphorylated form of RB. May interact with other transcription factors in order to regulate specific genes. Interacts with RUNX1. In terms of tissue distribution, in fetal tissues, it is highly expressed in heart, lung liver and kidney, and weakly expressed in brain. In adult, it is highly expressed in pancreas, spleen, thymus and peripheral blood leukocytes, expressed at moderate levels in heart, placenta, lung, liver, skeletal muscle, kidney, prostate, ovary, small intestine and colon, and weakly expressed in brain and testis.

It localises to the nucleus. Functionally, transcription factor that activates the LYN and BLK promoters. Appears to be required for the T-cell-receptor-mediated trans activation of HIV-2 gene expression. Binds specifically to two purine-rich motifs in the HIV-2 enhancer. The protein is ETS-related transcription factor Elf-1 (ELF1) of Homo sapiens (Human).